Reading from the N-terminus, the 357-residue chain is tRNA-specific 2-thiouridylase MnmA (357 aa).

ATP contacts are provided by residues 7 to 14 (GLSGGVDS) and methionine 33. The interaction with target base in tRNA stretch occupies residues 94–96 (NPD). Cysteine 99 (nucleophile) is an active-site residue. Cysteines 99 and 195 form a disulfide. Glycine 123 contacts ATP. Residues 145-147 (KDQ) form an interaction with tRNA region. Catalysis depends on cysteine 195, which acts as the Cysteine persulfide intermediate. The segment at 303–304 (RY) is interaction with tRNA.

Belongs to the MnmA/TRMU family.

The protein localises to the cytoplasm. The enzyme catalyses S-sulfanyl-L-cysteinyl-[protein] + uridine(34) in tRNA + AH2 + ATP = 2-thiouridine(34) in tRNA + L-cysteinyl-[protein] + A + AMP + diphosphate + H(+). In terms of biological role, catalyzes the 2-thiolation of uridine at the wobble position (U34) of tRNA, leading to the formation of s(2)U34. The protein is tRNA-specific 2-thiouridylase MnmA of Akkermansia muciniphila (strain ATCC BAA-835 / DSM 22959 / JCM 33894 / BCRC 81048 / CCUG 64013 / CIP 107961 / Muc).